Reading from the N-terminus, the 217-residue chain is Adenylate kinase (217 aa).

12–17 (GAGKGS) is a binding site for ATP. The tract at residues 32 to 61 (STGDMFRTHIKGSTPLGLEAKKYTDQGLLV) is NMP. AMP-binding positions include threonine 33, arginine 38, 59-61 (LLV), 87-90 (GYPR), and glutamine 94. Residues 128 to 165 (GRRTCPVCGAIYHVDNYPPKVAGICDNDGATLVQRKDD) are LID. Arginine 129 is a binding site for ATP. Residues cysteine 132 and cysteine 135 each coordinate Zn(2+). 138–139 (IY) contacts ATP. Residues cysteine 152 and aspartate 155 each contribute to the Zn(2+) site. The AMP site is built by arginine 162 and arginine 173. Glutamine 201 is an ATP binding site.

The protein belongs to the adenylate kinase family. In terms of assembly, monomer.

It localises to the cytoplasm. The enzyme catalyses AMP + ATP = 2 ADP. The protein operates within purine metabolism; AMP biosynthesis via salvage pathway; AMP from ADP: step 1/1. Its function is as follows. Catalyzes the reversible transfer of the terminal phosphate group between ATP and AMP. Plays an important role in cellular energy homeostasis and in adenine nucleotide metabolism. This is Adenylate kinase from Acholeplasma laidlawii (strain PG-8A).